A 463-amino-acid polypeptide reads, in one-letter code: Paraneoplastic antigen Ma3 (463 aa).

The interval 363-410 (VGAVPLPASGNSFDARPSQGYRRRRGRGQHRRGGVARAGSRGSRKRKR) is disordered. Positions 383-396 (YRRRRGRGQHRRGG) are enriched in basic residues. The segment at 412 to 429 (TFCYSCGEDGHIRVQCIN) adopts a CCHC-type zinc-finger fold. The tract at residues 440–463 (KQAAVESGNGNWAWDKSHPKSKAK) is disordered.

The protein belongs to the PNMA family. Expressed at high levels in the brain and testis. Expressed at lower levels in the heart, trachea and kidney.

The protein localises to the nucleus. The protein resides in the nucleolus. The chain is Paraneoplastic antigen Ma3 (PNMA3) from Homo sapiens (Human).